The primary structure comprises 307 residues: Aspartate carbamoyltransferase catalytic subunit (307 aa).

Carbamoyl phosphate contacts are provided by Arg54 and Thr55. Residue Lys83 coordinates L-aspartate. Residues Arg104, His132, and Gln135 each coordinate carbamoyl phosphate. Residues Arg165 and Arg228 each coordinate L-aspartate. Carbamoyl phosphate-binding residues include Leu267 and Pro268.

Belongs to the aspartate/ornithine carbamoyltransferase superfamily. ATCase family. In terms of assembly, heterododecamer (2C3:3R2) of six catalytic PyrB chains organized as two trimers (C3), and six regulatory PyrI chains organized as three dimers (R2).

It catalyses the reaction carbamoyl phosphate + L-aspartate = N-carbamoyl-L-aspartate + phosphate + H(+). It functions in the pathway pyrimidine metabolism; UMP biosynthesis via de novo pathway; (S)-dihydroorotate from bicarbonate: step 2/3. Its function is as follows. Catalyzes the condensation of carbamoyl phosphate and aspartate to form carbamoyl aspartate and inorganic phosphate, the committed step in the de novo pyrimidine nucleotide biosynthesis pathway. This is Aspartate carbamoyltransferase catalytic subunit from Clostridium botulinum (strain Eklund 17B / Type B).